A 206-amino-acid polypeptide reads, in one-letter code: Small ribosomal subunit protein uS4 (206 aa).

The interval 29–52 (LDKRPYAPGQHGQRRGRGRPSDYS) is disordered. The 76-residue stretch at 96-171 (RRLDNVVFRM…QKRRRVSPWV (76 aa)) folds into the S4 RNA-binding domain.

Belongs to the universal ribosomal protein uS4 family. As to quaternary structure, part of the 30S ribosomal subunit. Contacts protein S5. The interaction surface between S4 and S5 is involved in control of translational fidelity.

One of the primary rRNA binding proteins, it binds directly to 16S rRNA where it nucleates assembly of the body of the 30S subunit. Its function is as follows. With S5 and S12 plays an important role in translational accuracy. The chain is Small ribosomal subunit protein uS4 from Deinococcus deserti (strain DSM 17065 / CIP 109153 / LMG 22923 / VCD115).